We begin with the raw amino-acid sequence, 1392 residues long: ABC transporter G family member 42 (1392 aa).

The span at 1–18 shows a compositional bias: polar residues; the sequence is MTMSQTDGVEFASRNTNE. A disordered region spans residues 1 to 26; the sequence is MTMSQTDGVEFASRNTNENGHDDDDQ. Residues 139 to 413 form the ABC transporter 1 domain; sequence SKLSRFMCSN…FEDCGFKCPN (275 aa). 173–180 lines the ATP pocket; the sequence is GPPSCGKT. Positions 491–703 constitute an ABC transmembrane type-2 1 domain; that stretch reads DMLKACSRRE…AEIGLTANEF (213 aa). Helical transmembrane passes span 509–529, 543–563, 596–616, 627–647, 652–672, and 739–759; these read FVYV…MTVY, YLMG…LPEL, IPIS…VIGY, FLIL…IAAV, VVAT…GGFI, and FGAL…ALTF. Positions 800-1045 constitute an ABC transporter 2 domain; the sequence is FTFQDVQYII…VIEYFMRIHG (246 aa). ATP is bound at residue 837–844; sequence GVSGAGKT. One can recognise an ABC transmembrane type-2 2 domain in the interval 1117-1331; it reads EQFKACLWKQ…VLNGLLTSQY (215 aa). 7 helical membrane passes run 1136–1156, 1175–1195, 1215–1237, 1255–1275, 1281–1301, 1309–1329, and 1364–1384; these read YNLT…ILFW, MFTV…FSVA, YSLA…YVII, FYSI…LVVV, IAFT…GYVM, WWIW…LLTS, and LVAV…AFFI.

Belongs to the ABC transporter superfamily. ABCG family. PDR (TC 3.A.1.205) subfamily. Confined to shoots.

The protein localises to the membrane. Functionally, may be a general defense protein. The polypeptide is ABC transporter G family member 42 (ABCG42) (Arabidopsis thaliana (Mouse-ear cress)).